Consider the following 103-residue polypeptide: Large ribosomal subunit protein bL21 (103 aa).

The protein belongs to the bacterial ribosomal protein bL21 family. In terms of assembly, part of the 50S ribosomal subunit. Contacts protein L20.

Its function is as follows. This protein binds to 23S rRNA in the presence of protein L20. The polypeptide is Large ribosomal subunit protein bL21 (Clostridium botulinum (strain Alaska E43 / Type E3)).